We begin with the raw amino-acid sequence, 120 residues long: NAD(P)H-quinone oxidoreductase subunit 3, chloroplastic (120 aa).

The next 3 membrane-spanning stretches (helical) occupy residues 9 to 29, 64 to 84, and 88 to 108; these read IFWA…LFSG, MFAL…PWAM, and ILGV…IVGL.

It belongs to the complex I subunit 3 family. In terms of assembly, NDH is composed of at least 16 different subunits, 5 of which are encoded in the nucleus.

Its subcellular location is the plastid. It is found in the chloroplast thylakoid membrane. It carries out the reaction a plastoquinone + NADH + (n+1) H(+)(in) = a plastoquinol + NAD(+) + n H(+)(out). The catalysed reaction is a plastoquinone + NADPH + (n+1) H(+)(in) = a plastoquinol + NADP(+) + n H(+)(out). Functionally, NDH shuttles electrons from NAD(P)H:plastoquinone, via FMN and iron-sulfur (Fe-S) centers, to quinones in the photosynthetic chain and possibly in a chloroplast respiratory chain. The immediate electron acceptor for the enzyme in this species is believed to be plastoquinone. Couples the redox reaction to proton translocation, and thus conserves the redox energy in a proton gradient. This chain is NAD(P)H-quinone oxidoreductase subunit 3, chloroplastic, found in Spinacia oleracea (Spinach).